Here is a 377-residue protein sequence, read N- to C-terminus: Prostaglandin E synthase 2 (377 aa).

The Lumenal segment spans residues 1–57 (MDPAARVVRALWPGGCALAWRLGGRPQPLLPTQSRAGFAGAAGGPSPVAAARKGSPR). A helical transmembrane segment spans residues 58-74 (LLGAAALALGGALGLYH). Residues 75–377 (TARWHLRAQD…RAITEASPAH (303 aa)) are Cytoplasmic-facing. A Glutaredoxin domain is found at 90 to 193 (SAAQLSLSSR…EIITYYPAMK (104 aa)). A Phosphoserine modification is found at Ser95. Residues Val148 and 164–165 (DS) contribute to the glutathione site. In terms of domain architecture, GST C-terminal spans 263-377 (YIVREGKFGA…RAITEASPAH (115 aa)).

Belongs to the GST superfamily. As to quaternary structure, homodimer. May interact with CEBPB. Interacts with EXOSC10. Post-translationally, synthesized as a Golgi membrane-associated protein, and the proteolytic removal of the N-terminal hydrophobic domain leads to the formation of a mature cytosolic enzyme. In terms of tissue distribution, widely expressed. Expressed in the heart, including apex, inter-ventricular septum, both atria and ventricles, but not in the aorta. Also expressed in fetal heart. Detected in various regions of the brain: cerebellum; occipital, frontal and parietal lobes. Also expressed in the lymph nodes, skeletal muscle, kidney and trachea, but not in the thymus or lung. Overexpressed in colorectal cancer.

It localises to the golgi apparatus membrane. Its subcellular location is the cytoplasm. The protein localises to the perinuclear region. It catalyses the reaction prostaglandin H2 = prostaglandin E2. It carries out the reaction prostaglandin H2 = (12S)-hydroxy-(5Z,8E,10E)-heptadecatrienoate + malonaldehyde. It participates in lipid metabolism; prostaglandin biosynthesis. Isomerase activity is increased by sulfhydril compounds. Dithiothreitol (DTT) is most effective, followed by dihydrolipoic acid, glutathione (GSH) and 2-mercaptoethanol. Its function is as follows. Isomerase that catalyzes the conversion of PGH2 into the more stable prostaglandin E2 (PGE2) (in vitro). The biological function and the GSH-dependent property of PTGES2 is still under debate. In vivo, PTGES2 could form a complex with GSH and heme and would not participate in PGE2 synthesis but would catalyze the degradation of prostaglandin E2 H2 (PGH2) to 12(S)-hydroxy-5(Z),8(E),10(E)-heptadecatrienoic acid (HHT) and malondialdehyde (MDA). This is Prostaglandin E synthase 2 (PTGES2) from Homo sapiens (Human).